The following is a 340-amino-acid chain: Anthranilate phosphoribosyltransferase (340 aa).

Residues glycine 82, 85–86 (GD), threonine 90, 92–95 (NIST), 110–118 (KHGSRSVSS), and serine 122 contribute to the 5-phospho-alpha-D-ribose 1-diphosphate site. Glycine 82 is a binding site for anthranilate. Serine 94 lines the Mg(2+) pocket. Residue arginine 168 participates in anthranilate binding. Mg(2+) contacts are provided by aspartate 227 and glutamate 228.

It belongs to the anthranilate phosphoribosyltransferase family. As to quaternary structure, homodimer. Mg(2+) is required as a cofactor.

It catalyses the reaction N-(5-phospho-beta-D-ribosyl)anthranilate + diphosphate = 5-phospho-alpha-D-ribose 1-diphosphate + anthranilate. It participates in amino-acid biosynthesis; L-tryptophan biosynthesis; L-tryptophan from chorismate: step 2/5. In terms of biological role, catalyzes the transfer of the phosphoribosyl group of 5-phosphorylribose-1-pyrophosphate (PRPP) to anthranilate to yield N-(5'-phosphoribosyl)-anthranilate (PRA). The polypeptide is Anthranilate phosphoribosyltransferase (Hydrogenovibrio crunogenus (strain DSM 25203 / XCL-2) (Thiomicrospira crunogena)).